A 50-amino-acid chain; its full sequence is Protein HokE (50 aa).

The helical transmembrane segment at Tyr-5–Gly-25 threads the bilayer.

It belongs to the Hok/Gef family.

The protein localises to the cell inner membrane. Functionally, toxic component of a type I toxin-antitoxin (TA) system. When overexpressed kills cells within minutes; causes collapse of the transmembrane potential and arrest of respiration. Its toxic effect is probably neutralized by an antisense antitoxin Sok RNA. In Escherichia coli O157:H7, this protein is Protein HokE (hokE).